The following is a 309-amino-acid chain: Probable manganese-dependent inorganic pyrophosphatase (309 aa).

Mn(2+) contacts are provided by His9, Asp13, Asp15, Asp75, His97, and Asp149.

Belongs to the PPase class C family. The cofactor is Mn(2+).

It is found in the cytoplasm. It carries out the reaction diphosphate + H2O = 2 phosphate + H(+). The sequence is that of Probable manganese-dependent inorganic pyrophosphatase from Bacillus licheniformis (strain ATCC 14580 / DSM 13 / JCM 2505 / CCUG 7422 / NBRC 12200 / NCIMB 9375 / NCTC 10341 / NRRL NRS-1264 / Gibson 46).